The sequence spans 130 residues: Cytochrome c-type biogenesis protein CcmE (130 aa).

Over 1-7 the chain is Cytoplasmic; it reads MKKKHKR. Residues 8-28 form a helical; Signal-anchor for type II membrane protein membrane-spanning segment; sequence LLITSGIFCFLSCAVFFILTT. Residues 29-130 are Extracellular-facing; it reads LKENISFFYT…DENYKPKVLK (102 aa). Heme contacts are provided by histidine 120 and tyrosine 124.

Belongs to the CcmE/CycJ family.

Its subcellular location is the cell membrane. In terms of biological role, heme chaperone required for the biogenesis of c-type cytochromes. Transiently binds heme delivered by CcmC and transfers the heme to apo-cytochromes in a process facilitated by CcmF and CcmH. This Wolbachia pipientis subsp. Culex pipiens (strain wPip) protein is Cytochrome c-type biogenesis protein CcmE.